A 274-amino-acid chain; its full sequence is 2,3,4,5-tetrahydropyridine-2,6-dicarboxylate N-succinyltransferase (274 aa).

Substrate contacts are provided by Arg104 and Asp141.

This sequence belongs to the transferase hexapeptide repeat family. In terms of assembly, homotrimer.

The protein resides in the cytoplasm. It catalyses the reaction (S)-2,3,4,5-tetrahydrodipicolinate + succinyl-CoA + H2O = (S)-2-succinylamino-6-oxoheptanedioate + CoA. Its pathway is amino-acid biosynthesis; L-lysine biosynthesis via DAP pathway; LL-2,6-diaminopimelate from (S)-tetrahydrodipicolinate (succinylase route): step 1/3. In Sodalis glossinidius (strain morsitans), this protein is 2,3,4,5-tetrahydropyridine-2,6-dicarboxylate N-succinyltransferase.